A 361-amino-acid polypeptide reads, in one-letter code: Chorismate synthase (361 aa).

NADP(+) contacts are provided by R48 and R54. FMN contacts are provided by residues 125–127, 238–239, G278, 293–297, and R319; these read RSS, NA, and KPTSS.

It belongs to the chorismate synthase family. In terms of assembly, homotetramer. FMNH2 serves as cofactor.

It catalyses the reaction 5-O-(1-carboxyvinyl)-3-phosphoshikimate = chorismate + phosphate. It functions in the pathway metabolic intermediate biosynthesis; chorismate biosynthesis; chorismate from D-erythrose 4-phosphate and phosphoenolpyruvate: step 7/7. Catalyzes the anti-1,4-elimination of the C-3 phosphate and the C-6 proR hydrogen from 5-enolpyruvylshikimate-3-phosphate (EPSP) to yield chorismate, which is the branch point compound that serves as the starting substrate for the three terminal pathways of aromatic amino acid biosynthesis. This reaction introduces a second double bond into the aromatic ring system. This Pectobacterium carotovorum subsp. carotovorum (strain PC1) protein is Chorismate synthase.